A 354-amino-acid chain; its full sequence is Serum paraoxonase/arylesterase 2 (354 aa).

N-linked (GlcNAc...) asparagine glycosylation occurs at Asn29. A disulfide bond links Cys42 and Cys352. Residues Glu53 and Asp54 each coordinate Ca(2+). His114 functions as the Proton acceptor in the catalytic mechanism. Ca(2+) contacts are provided by Ile116, Asn167, Asp168, and Asn223. Residue Asn254 is glycosylated (N-linked (GlcNAc...) asparagine). Asp268 and Asn269 together coordinate Ca(2+). N-linked (GlcNAc...) asparagine glycans are attached at residues Asn269 and Asn323.

Belongs to the paraoxonase family. The cofactor is Ca(2+). Post-translationally, glycosylated. In terms of processing, the signal sequence is not cleaved.

It is found in the membrane. The catalysed reaction is a phenyl acetate + H2O = a phenol + acetate + H(+). It catalyses the reaction An aryl dialkyl phosphate + H2O = dialkyl phosphate + an aryl alcohol.. Its function is as follows. The absence of paraoxonase activity in turkey and chicken blood and in turkey liver indicates that PON2, if expressed, does not hydrolyze paraoxon. This chain is Serum paraoxonase/arylesterase 2 (PON2), found in Gallus gallus (Chicken).